The sequence spans 66 residues: Large ribosomal subunit protein bL32 (66 aa).

Belongs to the bacterial ribosomal protein bL32 family.

The sequence is that of Large ribosomal subunit protein bL32 from Rickettsia bellii (strain OSU 85-389).